The chain runs to 405 residues: MKRPIYLDYAATTPVDPQVAERMMECLTFDGTFGNAASRSHAYGWQAEEKVEYAREQVANLIKADPREIVWTSGATESDNLALKGVAQFYASKGKHIITSKIEHKAVLDPCRELEEQGFEITYLEPEPQTGLITPEMVKAALRPDTILVSLMMVNNEIGTVTDVAAIGELTRANKTFFHVDAAQAAGKVDIDLSTMKIDLMSFSAHKIYGPKGIGALYVRRSPRVRLKAQIHGGGHERGMRSGTLATHQIVGMGEAFELAGKTMHAEQERIRKLRDKLWNGLQDLEQVFLNGHPTQNVANYLNVSFNFVEGESLMMSLKDAAVSSGSACTSATLEPSYVLRALGLSDELAHSSIRFSFGKYTTEEDIDHVLTITKAAVEKLRELSPLWDMYKEGIDLSTVEWAEH.

Pyridoxal 5'-phosphate contacts are provided by residues 75–76 (AT), N156, Q184, and 204–206 (SAH). K207 carries the post-translational modification N6-(pyridoxal phosphate)lysine. Residue T244 coordinates pyridoxal 5'-phosphate. The active-site Cysteine persulfide intermediate is the C329. A [2Fe-2S] cluster-binding site is contributed by C329.

The protein belongs to the class-V pyridoxal-phosphate-dependent aminotransferase family. NifS/IscS subfamily. Homodimer. Forms a heterotetramer with IscU, interacts with other sulfur acceptors. Pyridoxal 5'-phosphate is required as a cofactor.

It is found in the cytoplasm. It carries out the reaction (sulfur carrier)-H + L-cysteine = (sulfur carrier)-SH + L-alanine. Its pathway is cofactor biosynthesis; iron-sulfur cluster biosynthesis. Its function is as follows. Master enzyme that delivers sulfur to a number of partners involved in Fe-S cluster assembly, tRNA modification or cofactor biosynthesis. Catalyzes the removal of elemental sulfur atoms from cysteine to produce alanine. Functions as a sulfur delivery protein for Fe-S cluster synthesis onto IscU, an Fe-S scaffold assembly protein, as well as other S acceptor proteins. The chain is Cysteine desulfurase IscS from Acinetobacter baumannii (strain AB307-0294).